We begin with the raw amino-acid sequence, 535 residues long: Beta-amylase (535 aa).

Positions 1-2 (ME) are cleaved as a propeptide — removed in mature form. Position 3 is an N-acetylvaline (Val3). Substrate contacts are provided by Asp51, His91, and Asp99. Glu184 functions as the Proton donor in the catalytic mechanism. Residues Lys293, His298, and Thr340 each coordinate substrate. The active-site Proton acceptor is Glu378. Residues 379–380 (NA) and Arg418 contribute to the substrate site. Repeat copies occupy residues 489-499 (GPTGGMGGQAE), 500-510 (GPTCGMGGQVK), and 511-521 (GPTGGMGGQAE). The segment at 489-532 (GPTGGMGGQAEGPTCGMGGQVKGPTGGMGGQAEDPTSGMGGELP) is 4 X 11 AA tandem repeats. A propeptide spans 490 to 535 (PTGGMGGQAEGPTCGMGGQVKGPTGGMGGQAEDPTSGMGGELPATM) (removed in mature form). The tract at residues 513–535 (TGGMGGQAEDPTSGMGGELPATM) is disordered. A 4; approximate repeat occupies 522–532 (DPTSGMGGELP).

This sequence belongs to the glycosyl hydrolase 14 family. As to quaternary structure, monomer. As to expression, endosperm.

It catalyses the reaction Hydrolysis of (1-&gt;4)-alpha-D-glucosidic linkages in polysaccharides so as to remove successive maltose units from the non-reducing ends of the chains.. Functionally, catalyzes the liberation of maltose from 1,4-alpha-D glucans. This Hordeum vulgare subsp. spontaneum (Wild barley) protein is Beta-amylase.